A 725-amino-acid polypeptide reads, in one-letter code: N-alpha-acetyltransferase 35, NatC auxiliary subunit (725 aa).

S187 carries the post-translational modification Phosphoserine. A disordered region spans residues 548 to 573 (ERIMEEQQKGRSSKKTKKKKKVRPLS). Basic residues predominate over residues 558–571 (RSSKKTKKKKKVRP).

It belongs to the MAK10 family. In terms of assembly, component of the N-terminal acetyltransferase C (NatC) complex, which is composed of NAA35, NAA38 and NAA30.

The protein localises to the cytoplasm. In terms of biological role, auxillary component of the N-terminal acetyltransferase C (NatC) complex which catalyzes acetylation of N-terminal methionine residues. N-terminal acetylation protects proteins from ubiquitination and degradation by the N-end rule pathway. Involved in regulation of apoptosis and proliferation of smooth muscle cells. This is N-alpha-acetyltransferase 35, NatC auxiliary subunit (NAA35) from Homo sapiens (Human).